The sequence spans 494 residues: MDTIMPLPTHFYTTQQLKQGEQDAASERGLELFHLMERAGQAVFTIAFAQYPTSHHWLICCGGGNNGGDGYIVAVLARHMGIDVTVWQLGDPEKLPADAHRAYQQWKELGGAVYAPQSEVPESTDVIIDALFGIGLKEVLRPQVVPLVELLNQSGKPIVAVDVPSGLCADTGQVMGTCIKAQHTVSLIGLKQGLVTGQARCYVGTLHYAGLGVEEVFAQHNTPSLVSIDGKLRHSLLPPRQACTHKGQNGKALIVGGNEGMGGALILCASACARSGAGLSAAMTHPDNVTAMLTITPEVMSTSWNKQHLFEERIEWCDALALGPGLGRDAQAQQIMQRLSSLKVPKVWDADALYFLAHNPSYDAQRIITPHPVEAARLLGCEVEEVEQDRFAAIRQLQQRYGGVVVLKGAGTLVDDGKEIAVCLQGNPGMASGGMGDVLTGIIVALLAQKIPLADAAKLGVWLHSSAADLNTKSHGQRGLLASDLLPHLRELLN.

The NAD(P)H-hydrate epimerase stretch occupies residues 1–221 (MDTIMPLPTH…GVEEVFAQHN (221 aa)). In terms of domain architecture, YjeF N-terminal spans 17-219 (LKQGEQDAAS…GLGVEEVFAQ (203 aa)). The NADPHX 1; for epimerase activity stretch occupies residues 65-69 (NNGGD). Asn66 and Asp129 together coordinate K(+). An NADPHX 1; for epimerase activity region spans residues 133-139 (GIGLKEV). Asp162 contributes to the (6S)-NADPHX binding site. Residue Ser165 participates in K(+) binding. Residues 229–494 (DGKLRHSLLP…LLPHLRELLN (266 aa)) form the YjeF C-terminal domain. Residues 229–494 (DGKLRHSLLP…LLPHLRELLN (266 aa)) form an ADP-dependent (S)-NAD(P)H-hydrate dehydratase region. Gly325 serves as a coordination point for (6S)-NADPHX. The segment at 371 to 377 (HPVEAAR) is NADPHX 2; for dehydratase activity. ADP is bound by residues 408–412 (KGAGT) and 427–436 (NPGMASGGMG). Asp437 lines the (6S)-NADPHX pocket.

It in the N-terminal section; belongs to the NnrE/AIBP family. In the C-terminal section; belongs to the NnrD/CARKD family. It depends on K(+) as a cofactor.

The catalysed reaction is (6S)-NADHX + ADP = AMP + phosphate + NADH + H(+). It catalyses the reaction (6S)-NADPHX + ADP = AMP + phosphate + NADPH + H(+). The enzyme catalyses (6R)-NADHX = (6S)-NADHX. It carries out the reaction (6R)-NADPHX = (6S)-NADPHX. Functionally, bifunctional enzyme that catalyzes the epimerization of the S- and R-forms of NAD(P)HX and the dehydration of the S-form of NAD(P)HX at the expense of ADP, which is converted to AMP. This allows the repair of both epimers of NAD(P)HX, a damaged form of NAD(P)H that is a result of enzymatic or heat-dependent hydration. This Vibrio cholerae serotype O1 (strain ATCC 39315 / El Tor Inaba N16961) protein is Bifunctional NAD(P)H-hydrate repair enzyme Nnr (nnr).